Here is a 451-residue protein sequence, read N- to C-terminus: tRNA-2-methylthio-N(6)-dimethylallyladenosine synthase (451 aa).

Residues 6–122 (RRYHIITFGC…LDQLLEQVWA (117 aa)) form the MTTase N-terminal domain. [4Fe-4S] cluster is bound by residues cysteine 15, cysteine 51, cysteine 85, cysteine 157, cysteine 161, and cysteine 164. The region spanning 143–384 (RESTVSAWVN…STQAMERSQR (242 aa)) is the Radical SAM core domain. A TRAM domain is found at 383-447 (QRYLGRVEEV…AFSLTGEALS (65 aa)).

The protein belongs to the methylthiotransferase family. MiaB subfamily. As to quaternary structure, monomer. [4Fe-4S] cluster is required as a cofactor.

The protein localises to the cytoplasm. The enzyme catalyses N(6)-dimethylallyladenosine(37) in tRNA + (sulfur carrier)-SH + AH2 + 2 S-adenosyl-L-methionine = 2-methylsulfanyl-N(6)-dimethylallyladenosine(37) in tRNA + (sulfur carrier)-H + 5'-deoxyadenosine + L-methionine + A + S-adenosyl-L-homocysteine + 2 H(+). Its function is as follows. Catalyzes the methylthiolation of N6-(dimethylallyl)adenosine (i(6)A), leading to the formation of 2-methylthio-N6-(dimethylallyl)adenosine (ms(2)i(6)A) at position 37 in tRNAs that read codons beginning with uridine. The protein is tRNA-2-methylthio-N(6)-dimethylallyladenosine synthase of Synechocystis sp. (strain ATCC 27184 / PCC 6803 / Kazusa).